Consider the following 129-residue polypeptide: uncharacterized protein (129 aa).

A signal peptide spans M1–A24. A run of 2 helical transmembrane segments spans residues I38 to F58 and I95 to L115.

Its subcellular location is the membrane. This is an uncharacterized protein from Saccharomyces cerevisiae (strain ATCC 204508 / S288c) (Baker's yeast).